A 678-amino-acid chain; its full sequence is Zinc finger protein 334 (678 aa).

The region spanning 8 to 79 (VSFQDLTVNF…EEFSNQNYPE (72 aa)) is the KRAB domain. 14 C2H2-type zinc fingers span residues 235 to 257 (NEPC…QRIH), 263 to 285 (YVCN…QRIH), 291 to 313 (YECS…QKIH), 319 to 341 (YECN…FRSH), 347 to 369 (YECK…QRTH), 375 to 397 (NECK…QRIH), 403 to 425 (YECS…RRSH), 431 to 453 (YECS…QITH), 459 to 481 (YECN…QRTH), 542 to 564 (YECN…QRTH), 570 to 592 (YECN…QRTH), 598 to 620 (YERN…RRIH), 626 to 648 (YECN…QKIH), and 654 to 676 (YECN…QKSH).

It belongs to the krueppel C2H2-type zinc-finger protein family.

It is found in the nucleus. May be involved in transcriptional regulation. In Pongo abelii (Sumatran orangutan), this protein is Zinc finger protein 334 (ZNF334).